The following is a 318-amino-acid chain: Thiohydrolase aneE (318 aa).

Belongs to the polyketide transferase af380 family.

It catalyses the reaction aculene D + L-prolyl-[peptidyl-carrier protein] = aculene B + holo-[peptidyl-carrier protein]. The catalysed reaction is aculene C + L-prolyl-[peptidyl-carrier protein] = aculene A + holo-[peptidyl-carrier protein]. It participates in secondary metabolite biosynthesis. Thiohydrolase; part of the gene cluster that mediates the biosynthesis of aculenes, a unique type of norsesquiterpenes that contain a nordaucane skeleton linked to an L-proline moiety and are of mixed biosynthetic origin. The pathway begins with the synthesis of dauca-4,7-diene by the terpene cyclase aneC using farnesyl pyrophosphate (FPP) as substrate. The cytochrome P450 monooxygenase aneF then performs the initial oxidation at C-12 of dauca-4,7-diene to yield asperaculane D. Asperaculane D is substrate of the cytochrome P450 monooxygenase aneD for C-10 hydroxylation to yield asperaculane E. The cytochrome P450 monooxygenase aneG then converts asperaculane E into aculene D via C-2 oxidation. The monomodular nonribosomal peptide synthtase aneB adenylates L-proline and the thiohydrolase aneE transfers this activated L-proline derivative to aculenes D and C to produce respectively aculenes B and A. The dioxygenase aneA converts aculene D into aculene C, and aculene B into aculene A by introducing the 5,6-alkene moiety. Asperculanes A, B, C and F, as well as 14-prolyl asperculane C, might be shunt products of the pathway. This Aspergillus aculeatus (strain ATCC 16872 / CBS 172.66 / WB 5094) protein is Thiohydrolase aneE.